We begin with the raw amino-acid sequence, 71 residues long: uncharacterized protein (71 aa).

The 55-residue stretch at 5-59 (IKEFRAKFNMTQEELAKRVGVRRETIVFLEKGKYNPSLKLAYKIARVFNAKIEDI) folds into the HTH cro/C1-type domain. Residues 16-35 (QEELAKRVGVRRETIVFLEK) constitute a DNA-binding region (H-T-H motif).

This is an uncharacterized protein from Archaeoglobus fulgidus (strain ATCC 49558 / DSM 4304 / JCM 9628 / NBRC 100126 / VC-16).